A 494-amino-acid polypeptide reads, in one-letter code: BTB/POZ domain and ankyrin repeat-containing protein NH5.1 (494 aa).

A BTB domain is found at 25–130 (SDVAFSVEGR…LYSGQASVAA (106 aa)). Positions 60-94 (NHQPPPPPPPLNWPMAGGGGGGSGGGGRGGAGGGG) are disordered. The span at 61 to 71 (HQPPPPPPPLN) shows a compositional bias: pro residues. Residues 75-94 (AGGGGGGSGGGGRGGAGGGG) are compositionally biased toward gly residues. Residues 136-150 (LPGCGARGCWHTRCG) form a C2HC NPR-type zinc finger. Positions 139, 144, 146, and 149 each coordinate Zn(2+). ANK repeat units follow at residues 274 to 302 (NKIR…GLDL), 303 to 333 (DDAL…DVNS), 338 to 367 (TGKT…DPNS), and 371 to 405 (DGVT…KLRL). Disordered regions lie at residues 421–443 (DGAP…PRSD) and 469–494 (AAGE…NGFA).

The protein belongs to the plant 'ANKYRIN-BTB/POZ' family. 'NOOT-BOP-COCH-like' (NBCL) subfamily. Homodimer. Interacts with TGAL5, TGAL7, TGAL8 and TGAL9.

It localises to the nucleus. Its subcellular location is the cytoplasm. It participates in protein modification; protein ubiquitination. Functionally, may act as a substrate-specific adapter of an E3 ubiquitin-protein ligase complex (CUL3-RBX1-BTB) which mediates the ubiquitination and subsequent proteasomal degradation of target proteins. Transcriptional co-regulator involved in the promotion of leaf and floral meristem fate and determinacy. Required for the abscission of senescent organs, probably by regulating the cell wall disorganization in abscission zones (AZs, e.g. pulvini at the base of leaves). The polypeptide is BTB/POZ domain and ankyrin repeat-containing protein NH5.1 (Oryza sativa subsp. japonica (Rice)).